Reading from the N-terminus, the 40-residue chain is Unknown protein from spot 207 of 2D-PAGE of etiolated coleoptile (40 aa).

It belongs to the GST superfamily. HSP26 family.

In Zea mays (Maize), this protein is Unknown protein from spot 207 of 2D-PAGE of etiolated coleoptile.